The sequence spans 66 residues: UPF0337 protein RPA4217 (66 aa).

Belongs to the UPF0337 (CsbD) family.

In Rhodopseudomonas palustris (strain ATCC BAA-98 / CGA009), this protein is UPF0337 protein RPA4217.